A 478-amino-acid polypeptide reads, in one-letter code: Probable cytosol aminopeptidase (478 aa).

Residues Lys-244 and Asp-249 each coordinate Mn(2+). Residue Lys-256 is part of the active site. Residues Asp-267, Asp-326, and Glu-328 each contribute to the Mn(2+) site. The active site involves Arg-330.

This sequence belongs to the peptidase M17 family. Mn(2+) serves as cofactor.

The protein resides in the cytoplasm. It catalyses the reaction Release of an N-terminal amino acid, Xaa-|-Yaa-, in which Xaa is preferably Leu, but may be other amino acids including Pro although not Arg or Lys, and Yaa may be Pro. Amino acid amides and methyl esters are also readily hydrolyzed, but rates on arylamides are exceedingly low.. It carries out the reaction Release of an N-terminal amino acid, preferentially leucine, but not glutamic or aspartic acids.. In terms of biological role, presumably involved in the processing and regular turnover of intracellular proteins. Catalyzes the removal of unsubstituted N-terminal amino acids from various peptides. This is Probable cytosol aminopeptidase from Fusobacterium nucleatum subsp. nucleatum (strain ATCC 25586 / DSM 15643 / BCRC 10681 / CIP 101130 / JCM 8532 / KCTC 2640 / LMG 13131 / VPI 4355).